The following is a 385-amino-acid chain: Glucans biosynthesis protein C (385 aa).

Helical transmembrane passes span 17-37, 60-80, 91-111, 137-157, 173-193, 212-232, 239-259, 274-294, 311-331, and 338-358; these read AWLM…SHTW, MLVF…RYPL, VGIP…IMLQ, ISHL…VWIF, KFSM…YAVI, FIVM…LAFI, LFTT…VAYL, TESV…FSFG, ASLF…AYIT, and WLGF…LYEI.

The protein belongs to the acyltransferase 3 family. OpgC subfamily.

The protein resides in the cell membrane. Its pathway is glycan metabolism; osmoregulated periplasmic glucan (OPG) biosynthesis. Necessary for the succinyl substitution of periplasmic glucans. Could catalyze the transfer of succinyl residues from the cytoplasmic side of the membrane to the nascent glucan backbones on the periplasmic side of the membrane. The protein is Glucans biosynthesis protein C of Shigella boydii serotype 4 (strain Sb227).